Consider the following 407-residue polypeptide: Substance-P receptor (407 aa).

Over 1–31 the chain is Extracellular; that stretch reads MDNVLQVDSDLFPNISTNTSEPNQFVQPAWQ. N-linked (GlcNAc...) asparagine glycans are attached at residues Asn14 and Asn18. Residues 32–54 form a helical membrane-spanning segment; that stretch reads IVLWAAAYTVIVVTSVVGNVVVM. The Cytoplasmic portion of the chain corresponds to 55 to 64; that stretch reads WIILAHKRMR. A helical transmembrane segment spans residues 65-86; the sequence is TVTNYFLVNLAFAEASMAAFNT. The Extracellular portion of the chain corresponds to 87–106; that stretch reads VVNFTYAVHNEWYYGLFYCK. Cys105 and Cys180 form a disulfide bridge. The helical transmembrane segment at 107 to 128 threads the bilayer; sequence FHNFFPIAAVFASIYSMTAVAF. Residues 129–148 lie on the Cytoplasmic side of the membrane; that stretch reads DRYMAIIHPLQPRLSATATK. A helical membrane pass occupies residues 149–169; that stretch reads VVICVIWVLALLLAFPQGYYS. Over 170–194 the chain is Extracellular; it reads TTETMPNRVVCMIEWPEHPNKIYEK. Residues 195 to 219 form a helical membrane-spanning segment; sequence VYHICVTVLIYFLPLLVIGYAYTVV. The Cytoplasmic portion of the chain corresponds to 220 to 248; the sequence is GITLWASEIPGDSSDRYHEQVSAKRKVVK. A helical membrane pass occupies residues 249–270; the sequence is MMIVVVCTFAICWLPFHIFFLL. The Extracellular portion of the chain corresponds to 271-283; sequence PYINPDLYLEKFI. Residues 284-308 traverse the membrane as a helical segment; sequence QQVYLAIMWLAMSSTMYNPIIYCCL. Residues 309–407 are Cytoplasmic-facing; that stretch reads NDRFRLGFKH…SFSFYSNMLS (99 aa). A lipid anchor (S-palmitoyl cysteine) is attached at Cys322. The segment at 365–394 is disordered; that stretch reads HEEELEDGPKTTPSSLDLTSNGSSRSDSKT. Polar residues predominate over residues 375-394; that stretch reads TTPSSLDLTSNGSSRSDSKT.

This sequence belongs to the G-protein coupled receptor 1 family. As to quaternary structure, interacts with ARRB1.

The protein resides in the cell membrane. Functionally, this is a receptor for the tachykinin neuropeptide substance P. It is probably associated with G proteins that activate a phosphatidylinositol-calcium second messenger system. The chain is Substance-P receptor (TACR1) from Canis lupus familiaris (Dog).